The following is a 56-amino-acid chain: ComX pheromone (56 aa).

A propeptide spanning residues 1–50 (MMQDLINYFLSYPEVLKKLKNREACLIGFSSNETETIIKAYNDYHLSSPT) is cleaved from the precursor. Trp54 bears the Tryptophan derivative mark. The 3'-farnesyl-2',N2-cyclotryptophan moiety is linked to residue Trp54.

Interacts directly with the sensor histidine kinase ComP and stimulates its activity. In terms of processing, trp-54 is modified by farnesylation, which is essential for activity. Modified by the tryptophan prenyltransferase ComQ before export to the extracellular environment. The type of isoprenyl derivative differs among the different pherotypes and depends on ComX primary sequence.

Its subcellular location is the secreted. Part of a major quorum-sensing system that regulates the development of genetic competence. Acts through the activation of the two-component regulatory system ComP/ComA composed of a sensor histidine kinase, ComP, and a response regulator, ComA. The sequence is that of ComX pheromone from Bacillus mojavensis.